Here is a 69-residue protein sequence, read N- to C-terminus: MVPPVQVSPLIKLGRYSALVLGMAYGAKRYSYLKPRAEEERRVAAEEKKRLDELKRIERELAEGDTILK.

Lysine 34 carries the N6-acetyllysine modification.

The protein belongs to the ATPase e subunit family. Component of the ATP synthase complex composed at least of ATP5F1A/subunit alpha, ATP5F1B/subunit beta, ATP5MC1/subunit c (homooctomer), MT-ATP6/subunit a, MT-ATP8/subunit 8, ATP5ME/subunit e, ATP5MF/subunit f, ATP5MG/subunit g, ATP5MK/subunit k, ATP5MJ/subunit j, ATP5F1C/subunit gamma, ATP5F1D/subunit delta, ATP5F1E/subunit epsilon, ATP5PF/subunit F6, ATP5PB/subunit b, ATP5PD/subunit d, ATP5PO/subunit OSCP. ATP synthase complex consists of a soluble F(1) head domain (subunits alpha(3) and beta(3)) - the catalytic core - and a membrane F(0) domain - the membrane proton channel (subunits c, a, 8, e, f, g, k and j). These two domains are linked by a central stalk (subunits gamma, delta, and epsilon) rotating inside the F1 region and a stationary peripheral stalk (subunits F6, b, d, and OSCP).

It is found in the mitochondrion. The protein localises to the mitochondrion inner membrane. Subunit e, of the mitochondrial membrane ATP synthase complex (F(1)F(0) ATP synthase or Complex V) that produces ATP from ADP in the presence of a proton gradient across the membrane which is generated by electron transport complexes of the respiratory chain. ATP synthase complex consist of a soluble F(1) head domain - the catalytic core - and a membrane F(1) domain - the membrane proton channel. These two domains are linked by a central stalk rotating inside the F(1) region and a stationary peripheral stalk. During catalysis, ATP synthesis in the catalytic domain of F(1) is coupled via a rotary mechanism of the central stalk subunits to proton translocation. In vivo, can only synthesize ATP although its ATP hydrolase activity can be activated artificially in vitro. Part of the complex F(0) domain. This chain is ATP synthase F(0) complex subunit e, mitochondrial, found in Cricetulus longicaudatus (Long-tailed dwarf hamster).